The chain runs to 103 residues: Pyrimidine/purine nucleoside phosphorylase (103 aa).

It belongs to the nucleoside phosphorylase PpnP family.

It catalyses the reaction a purine D-ribonucleoside + phosphate = a purine nucleobase + alpha-D-ribose 1-phosphate. It carries out the reaction adenosine + phosphate = alpha-D-ribose 1-phosphate + adenine. The catalysed reaction is cytidine + phosphate = cytosine + alpha-D-ribose 1-phosphate. The enzyme catalyses guanosine + phosphate = alpha-D-ribose 1-phosphate + guanine. It catalyses the reaction inosine + phosphate = alpha-D-ribose 1-phosphate + hypoxanthine. It carries out the reaction thymidine + phosphate = 2-deoxy-alpha-D-ribose 1-phosphate + thymine. The catalysed reaction is uridine + phosphate = alpha-D-ribose 1-phosphate + uracil. The enzyme catalyses xanthosine + phosphate = alpha-D-ribose 1-phosphate + xanthine. Its function is as follows. Catalyzes the phosphorolysis of diverse nucleosides, yielding D-ribose 1-phosphate and the respective free bases. Can use uridine, adenosine, guanosine, cytidine, thymidine, inosine and xanthosine as substrates. Also catalyzes the reverse reactions. The protein is Pyrimidine/purine nucleoside phosphorylase of Chlorobium chlorochromatii (strain CaD3).